The sequence spans 187 residues: GTP cyclohydrolase 1 (187 aa).

3 residues coordinate Zn(2+): Cys-76, His-79, and Cys-148.

The protein belongs to the GTP cyclohydrolase I family. Toroid-shaped homodecamer, composed of two pentamers of five dimers.

The enzyme catalyses GTP + H2O = 7,8-dihydroneopterin 3'-triphosphate + formate + H(+). It functions in the pathway cofactor biosynthesis; 7,8-dihydroneopterin triphosphate biosynthesis; 7,8-dihydroneopterin triphosphate from GTP: step 1/1. This chain is GTP cyclohydrolase 1, found in Streptococcus agalactiae serotype Ia (strain ATCC 27591 / A909 / CDC SS700).